We begin with the raw amino-acid sequence, 154 residues long: Ribonuclease H (154 aa).

Residues 3 to 144 (ELPVVTIYTD…ADQLARDGIV (142 aa)) enclose the RNase H type-1 domain. 4 residues coordinate Mg(2+): aspartate 12, glutamate 50, aspartate 72, and aspartate 136.

Belongs to the RNase H family. As to quaternary structure, monomer. It depends on Mg(2+) as a cofactor.

It localises to the cytoplasm. The catalysed reaction is Endonucleolytic cleavage to 5'-phosphomonoester.. Endonuclease that specifically degrades the RNA of RNA-DNA hybrids. In Bradyrhizobium diazoefficiens (strain JCM 10833 / BCRC 13528 / IAM 13628 / NBRC 14792 / USDA 110), this protein is Ribonuclease H.